The chain runs to 268 residues: Shikimate dehydrogenase (NADP(+)) (268 aa).

Shikimate is bound by residues 13–15 and threonine 60; that span reads SLS. The active-site Proton acceptor is lysine 64. Aspartate 76 lines the NADP(+) pocket. Residues asparagine 85 and aspartate 100 each contribute to the shikimate site. Residues 124–128, 148–153, and isoleucine 209 contribute to the NADP(+) site; these read GAGGA and NRTMSR. Shikimate is bound at residue tyrosine 211. Residue glycine 232 coordinates NADP(+).

Belongs to the shikimate dehydrogenase family. As to quaternary structure, homodimer.

It carries out the reaction shikimate + NADP(+) = 3-dehydroshikimate + NADPH + H(+). Its pathway is metabolic intermediate biosynthesis; chorismate biosynthesis; chorismate from D-erythrose 4-phosphate and phosphoenolpyruvate: step 4/7. Its function is as follows. Involved in the biosynthesis of the chorismate, which leads to the biosynthesis of aromatic amino acids. Catalyzes the reversible NADPH linked reduction of 3-dehydroshikimate (DHSA) to yield shikimate (SA). This Staphylococcus haemolyticus (strain JCSC1435) protein is Shikimate dehydrogenase (NADP(+)).